We begin with the raw amino-acid sequence, 398 residues long: Nicotinate phosphoribosyltransferase 2 (398 aa).

Phosphohistidine; by autocatalysis is present on His224.

It belongs to the NAPRTase family. Transiently phosphorylated on a His residue during the reaction cycle. Phosphorylation strongly increases the affinity for substrates and increases the rate of nicotinate D-ribonucleotide production. Dephosphorylation regenerates the low-affinity form of the enzyme, leading to product release.

It catalyses the reaction nicotinate + 5-phospho-alpha-D-ribose 1-diphosphate + ATP + H2O = nicotinate beta-D-ribonucleotide + ADP + phosphate + diphosphate. The protein operates within cofactor biosynthesis; NAD(+) biosynthesis; nicotinate D-ribonucleotide from nicotinate: step 1/1. Its function is as follows. Catalyzes the synthesis of beta-nicotinate D-ribonucleotide from nicotinate and 5-phospho-D-ribose 1-phosphate at the expense of ATP. The protein is Nicotinate phosphoribosyltransferase 2 of Pseudomonas aeruginosa (strain ATCC 15692 / DSM 22644 / CIP 104116 / JCM 14847 / LMG 12228 / 1C / PRS 101 / PAO1).